Consider the following 358-residue polypeptide: Peptide chain release factor 1 (358 aa).

Position 234 is an N5-methylglutamine (Gln-234).

Belongs to the prokaryotic/mitochondrial release factor family. Methylated by PrmC. Methylation increases the termination efficiency of RF1.

It is found in the cytoplasm. Its function is as follows. Peptide chain release factor 1 directs the termination of translation in response to the peptide chain termination codons UAG and UAA. The protein is Peptide chain release factor 1 of Chloroherpeton thalassium (strain ATCC 35110 / GB-78).